The sequence spans 462 residues: Alkaline ceramidase TOD1 (462 aa).

The Cytoplasmic segment spans residues 1–18; it reads MGKFITTTLSPPLYARSK. A helical transmembrane segment spans residues 19-39; it reads LLCFSLLYLFSTIFLFLYVSL. Over 40–462 the chain is Lumenal; it reads SRNQCIFRYS…CKNYLTDMWG (423 aa). Asparagine 121, asparagine 132, and asparagine 449 each carry an N-linked (GlcNAc...) asparagine glycan.

This sequence belongs to the alkaline ceramidase family. Preferentially expressed in pollen grains, pollen tubes and silique guard cells, but barely detectable in roots, stems and leaves.

The protein resides in the golgi apparatus membrane. The catalysed reaction is an N-acylsphing-4-enine + H2O = sphing-4-enine + a fatty acid. It functions in the pathway lipid metabolism. Its function is as follows. Endoplasmic reticulum ceramidase that catalyzes the hydrolysis of ceramides into sphingosine and free fatty acids at alkaline pH (e.g. pH 9.5). Inactive on phytoceramide. Involved in the regulation of turgor pressure in guard cells and pollen tubes. The chain is Alkaline ceramidase TOD1 from Arabidopsis thaliana (Mouse-ear cress).